The primary structure comprises 810 residues: Protein kinase C-binding protein NELL1 (810 aa).

The first 21 residues, 1–21, serve as a signal peptide directing secretion; the sequence is MPMDVILVLWFCVCTARTVLG. N-linked (GlcNAc...) asparagine glycosylation is found at Asn-40, Asn-53, Asn-83, Asn-224, Asn-294, and Asn-372. In terms of domain architecture, Laminin G-like spans 57-227; sequence AFLFQDVQRE…TQCPNLNRTC (171 aa). One can recognise a VWFC 1 domain in the interval 271–332; it reads KTCQVSGLLY…ISGQCCKVCR (62 aa). 3 disulfide bridges follow: Cys-395/Cys-407, Cys-401/Cys-416, and Cys-418/Cys-432. The Ca(2+) site is built by Asp-434, Ile-435, and Glu-437. Residues 434-475 form the EGF-like 1; calcium-binding domain; that stretch reads DIDECAAKMHYCHANTVCVNLPGLYRCDCVPGYIRVDDFSCT. Intrachain disulfides connect Cys-438–Cys-451, Cys-445–Cys-460, Cys-462–Cys-474, Cys-480–Cys-493, Cys-487–Cys-502, Cys-504–Cys-515, Cys-519–Cys-529, Cys-523–Cys-535, Cys-537–Cys-546, Cys-553–Cys-566, Cys-560–Cys-575, Cys-577–Cys-594, Cys-600–Cys-613, Cys-607–Cys-622, and Cys-624–Cys-630. Residues Asn-453, Leu-454, and Leu-457 each contribute to the Ca(2+) site. In terms of domain architecture, EGF-like 2; calcium-binding spans 476–516; that stretch reads EHDDCGSGQHNCDKNAICTNTVQGHSCTCQPGYVGNGTICK. An N-linked (GlcNAc...) asparagine glycan is attached at Asn-511. The EGF-like 3 domain maps to 517-547; sequence AFCEEGCRYGGTCVAPNKCVCPSGFTGSHCE. One can recognise an EGF-like 4; calcium-binding domain in the interval 549–587; the sequence is DIDECAEGFVECHNHSRCVNLPGWYHCECRSGFHDDGTY. Residue Asn-562 is glycosylated (N-linked (GlcNAc...) asparagine). The EGF-like 5; calcium-binding domain occupies 596 to 631; the sequence is DIDECALRTHTCWNDSACINLAGGFDCLCPSGPSCS. Residue Asn-609 is glycosylated (N-linked (GlcNAc...) asparagine). VWFC domains lie at 632–687 and 692–750; these read GDCP…PECD and SQCL…PRCV. N-linked (GlcNAc...) asparagine glycosylation is present at Asn-708.

As to quaternary structure, interacts with ATRAID; the interaction promotes osteoblast cell differentiation and mineralization. Homotrimer. Binds to PKC beta-1. Interacts with ROBO3.

It localises to the cytoplasm. Its subcellular location is the nucleus envelope. The protein localises to the secreted. Functionally, plays a role in the control of cell growth and differentiation. Promotes osteoblast cell differentiation and terminal mineralization. The polypeptide is Protein kinase C-binding protein NELL1 (Nell1) (Rattus norvegicus (Rat)).